A 107-amino-acid polypeptide reads, in one-letter code: Sperm protamine P1 (107 aa).

2 stretches are compositionally biased toward basic and acidic residues: residues 1 to 10 (ALRKVDRNRF) and 20 to 33 (REAKRYKEEEEFPG). Positions 1-35 (ALRKVDRNRFVLDNVTPQPREAKRYKEEEEFPGHG) are cleaved as a propeptide — removed in mature form. Residues 1–107 (ALRKVDRNRF…RRRRRGKKGK (107 aa)) form a disordered region. Over residues 34 to 107 (HGRRRRRRSK…RRRRRGKKGK (74 aa)) the composition is skewed to basic residues. Ser42 is subject to Phosphoserine.

A series of N-terminal cleavages yield the mature protein. Post-translationally, only the mature protein is phosphorylated. In terms of tissue distribution, gonads.

The protein localises to the nucleus. Its subcellular location is the chromosome. Protamines substitute for histones in the chromatin of sperm during the haploid phase of spermatogenesis. They compact sperm DNA into a highly condensed, stable and inactive complex. This chain is Sperm protamine P1, found in Bolinus brandaris (Purple dye murex).